The chain runs to 98 residues: Integration host factor subunit alpha (98 aa).

Belongs to the bacterial histone-like protein family. As to quaternary structure, heterodimer of an alpha and a beta chain.

In terms of biological role, this protein is one of the two subunits of integration host factor, a specific DNA-binding protein that functions in genetic recombination as well as in transcriptional and translational control. This chain is Integration host factor subunit alpha, found in Actinobacillus pleuropneumoniae serotype 5b (strain L20).